The chain runs to 182 residues: Ribosome-recycling factor (182 aa).

This sequence belongs to the RRF family.

The protein resides in the cytoplasm. Responsible for the release of ribosomes from messenger RNA at the termination of protein biosynthesis. May increase the efficiency of translation by recycling ribosomes from one round of translation to another. In Gloeobacter violaceus (strain ATCC 29082 / PCC 7421), this protein is Ribosome-recycling factor.